Here is a 477-residue protein sequence, read N- to C-terminus: RTX-I toxin determinant D (477 aa).

The Cytoplasmic segment spans residues 1–59 (MKTWLMGLYEFFQAYKTVWTEIWKIRHQLDTPDREKDENEFLPAHLELIETPVSKKPRL). A helical membrane pass occupies residues 60-80 (IAYLIMLFLFLALVISIVSHV). Residues 81 to 477 (EIVATATGKL…ESVSESLRER (397 aa)) are Periplasmic-facing.

The protein belongs to the membrane fusion protein (MFP) (TC 8.A.1) family.

The protein localises to the cell inner membrane. Functionally, involved in the transport of the toxin RTX-I as well as that of RTX-II. This is RTX-I toxin determinant D (apxID) from Actinobacillus pleuropneumoniae (Haemophilus pleuropneumoniae).